Consider the following 214-residue polypeptide: Ceramide-1-phosphate transfer protein (214 aa).

The an N-acylsphingoid base 1-phosphate site is built by aspartate 56, lysine 60, arginine 106, arginine 110, and histidine 150.

Belongs to the GLTP family.

It localises to the cytoplasm. The protein resides in the cytosol. Its subcellular location is the golgi apparatus. The protein localises to the trans-Golgi network membrane. It is found in the cell membrane. It localises to the endosome membrane. The protein resides in the nucleus outer membrane. It carries out the reaction N-(hexadecanoyl)-sphing-4-enine-1-phosphate(in) = N-(hexadecanoyl)-sphing-4-enine-1-phosphate(out). The enzyme catalyses N-(9Z-octadecenoyl)-sphing-4-enine-1-phosphate(in) = N-(9Z-octadecenoyl)-sphing-4-enine-1-phosphate(out). Mediates the intracellular transfer of ceramide-1-phosphate (C1P) between organelle membranes and the cell membrane. Required for normal structure of the Golgi stacks. Can bind phosphoceramides with a variety of aliphatic chains, but has a preference for lipids with saturated C16:0 or monounsaturated C18:1 aliphatic chains, and is inefficient with phosphoceramides containing lignoceryl (C24:0). Plays a role in the regulation of the cellular levels of ceramide-1-phosphate, and thereby contributes to the regulation of phospholipase PLA2G4A activity and the release of arachidonic acid. Has no activity with galactosylceramide, lactosylceramide, sphingomyelin, phosphatidylcholine, phosphatidic acid and ceramide. C1P transfer is stimulated by phosphatidylserine in C1P source vesicles. Regulates autophagy, inflammasome mediated IL1B and IL18 processing, and pyroptosis, but not apoptosis. The sequence is that of Ceramide-1-phosphate transfer protein (CPTP) from Bos taurus (Bovine).